The sequence spans 380 residues: MKVVHVVRQFHPSIGGMEEVVLNVARQHQATSADTVEVVTLDRVFTDPSGRLSAHDTHQGLPIRRIGYRGSSRYPLAPSVLDAIRSADVVHLHGIDFFYDYLALTKPLHGKPMVVSTHGGFFHTAYASCMKQLWFQTLTRISALAYARVIATSENDGDLFAEVVAPSRLRVIENGVDVQKYAGQGATTPGRTMLYFGRWSVNKGLIETLALLQAALKRDPQWRLIIAGREYDLNESDLRKAIAERGLQDKVQLSMSPSQEQLRALMQQAQFFVCLSRHEGFGIAAVEAMSAGLIPILSDIPPFVRLASESGQGVIVNRDKIEAAADQVQALALHADNDFDTRRTASMAYVSRYDWKHVVGRYIDEYHDALGIPRVQEAVR.

It belongs to the glycosyltransferase group 1 family. Glycosyltransferase 4 subfamily.

It carries out the reaction beta-D-Glc-(1-&gt;4)-alpha-D-Glc-di-trans,octa-cis-undecaprenyl diphosphate + GDP-alpha-D-mannose = alpha-D-Man-(1-&gt;3)-beta-D-Glc-(1-&gt;4)-alpha-D-Glc-1-di-trans,octa-cis-undecaprenyl diphosphate + GDP + H(+). Involved in the biosynthesis of the exopolysaccharide xanthan, a polymer that is comprised of repeating pentasaccharide units with the structure of a beta-(1,4)-linked D-glucose backbone with trisaccharide side chains composed of mannose-beta-(1,4)-glucuronic acid-beta-(1,2)-mannose attached to alternate glucose residues in the backbone by alpha-(1,3) linkages. Xanthan is involved in pathogenicity but has also been used in a variety of applications as a specialty polymer for commercial applications, including food additives, where they act as viscosifying, stabilizing, emulsifying, or gelling agents. The polypeptide is GDP-mannose:cellobiosyl-diphosphopolyprenol alpha-mannosyltransferase (gumH) (Xanthomonas oryzae pv. oryzae (strain PXO99A)).